Here is a 126-residue protein sequence, read N- to C-terminus: Glycine cleavage system H protein (126 aa).

Residues 23–105 (AATVGITDHA…YGEGWLLRVR (83 aa)) form the Lipoyl-binding domain. At Lys-64 the chain carries N6-lipoyllysine.

The protein belongs to the GcvH family. In terms of assembly, the glycine cleavage system is composed of four proteins: P, T, L and H. (R)-lipoate is required as a cofactor.

Its function is as follows. The glycine cleavage system catalyzes the degradation of glycine. The H protein shuttles the methylamine group of glycine from the P protein to the T protein. The chain is Glycine cleavage system H protein from Rubrobacter xylanophilus (strain DSM 9941 / JCM 11954 / NBRC 16129 / PRD-1).